The sequence spans 239 residues: Ribosomal RNA large subunit methyltransferase E (239 aa).

S-adenosyl-L-methionine-binding residues include glycine 88, tryptophan 90, aspartate 111, aspartate 127, and aspartate 151. Catalysis depends on lysine 191, which acts as the Proton acceptor.

It belongs to the class I-like SAM-binding methyltransferase superfamily. RNA methyltransferase RlmE family.

The protein resides in the cytoplasm. It carries out the reaction uridine(2552) in 23S rRNA + S-adenosyl-L-methionine = 2'-O-methyluridine(2552) in 23S rRNA + S-adenosyl-L-homocysteine + H(+). In terms of biological role, specifically methylates the uridine in position 2552 of 23S rRNA at the 2'-O position of the ribose in the fully assembled 50S ribosomal subunit. This is Ribosomal RNA large subunit methyltransferase E from Bartonella bacilliformis (strain ATCC 35685 / KC583 / Herrer 020/F12,63).